The chain runs to 562 residues: Tissue-type plasminogen activator (562 aa).

A signal peptide spans 1-20 (MNAMKRGLCCVLLLCGAVFA). Residues 21–32 (LPSQEIHARVRR) constitute a propeptide that is removed on maturation. A propeptide spans 33–35 (GAR) (removed by plasmin). Residues 39 to 81 (VICRDEKTQMIYQQHQSWLRPVLRSNRVEYCWCNSGRAQCHSV) enclose the Fibronectin type-I domain. Cystine bridges form between C41-C71, C69-C78, C86-C97, C91-C108, C110-C119, C127-C208, C148-C190, C179-C203, C215-C296, C236-C278, C267-C291, C299-C430, C342-C358, C350-C419, C444-C519, C476-C492, and C509-C537. Residues 42–52 (RDEKTQMIYQQ) form an important for binding to annexin A2 region. Residues 82 to 120 (PVRSCSEPRCFNGGTCQQALYFSDFVCQCPEGFAGKCCE) enclose the EGF-like domain. A glycan (O-linked (Fuc) threonine) is linked at T96. Kringle domains follow at residues 126 to 208 (TCYE…TPAC) and 214 to 296 (DCYF…VPSC). Residue N152 is glycosylated (N-linked (GlcNAc...) asparagine). In terms of domain architecture, Peptidase S1 spans 311–561 (IKGGLFADIA…YLDWIHDNMR (251 aa)). Residues H357 and D406 each act as charge relay system in the active site. N-linked (GlcNAc...) asparagine glycosylation is present at N483. S513 functions as the Charge relay system in the catalytic mechanism.

It belongs to the peptidase S1 family. As to quaternary structure, heterodimer of chain A and chain B held by a disulfide bond. Binds to fibrin with high affinity. This interaction leads to an increase in the catalytic efficiency of the enzyme due to an increase in affinity for plasminogen. Similarly, binding to heparin increases the activation of plasminogen. Binds to annexin A2, cytokeratin-8, fibronectin and laminin. Binds to mannose receptor and the low-density lipoprotein receptor-related protein (LRP1); these proteins are involved in TPA clearance. Binds LRP1B; binding is followed by internalization and degradation. Forms heterodimer with SERPINA5. Interacts with SERPINE1. In complex with SERPINE1, interacts with SORL1. Post-translationally, the single chain, almost fully active enzyme, can be further processed into a two-chain fully active form by a cleavage after Arg-310 catalyzed by plasmin, tissue kallikrein or factor Xa.

It is found in the secreted. The protein resides in the extracellular space. The catalysed reaction is Specific cleavage of Arg-|-Val bond in plasminogen to form plasmin.. Inhibited by SERPINA5. Inhibited by SERPINE1. Functionally, converts the abundant, but inactive, zymogen plasminogen to plasmin by hydrolyzing a single Arg-Val bond in plasminogen. By controlling plasmin-mediated proteolysis, it plays an important role in tissue remodeling and degradation, in cell migration and many other physiopathological events. During oocyte activation, plays a role in cortical granule reaction in the zona reaction, which contributes to the block to polyspermy. The protein is Tissue-type plasminogen activator (PLAT) of Pongo abelii (Sumatran orangutan).